Here is a 159-residue protein sequence, read N- to C-terminus: Transcription elongation factor A protein-like 1 (159 aa).

The disordered stretch occupies residues M1–N121. The segment covering K17–P34 has biased composition (basic and acidic residues). The span at Q37–L54 shows a compositional bias: acidic residues. 2 stretches are compositionally biased toward basic and acidic residues: residues S64–E80 and H95–G119.

The protein belongs to the TFS-II family. TFA subfamily.

The protein resides in the nucleus. May be involved in transcriptional regulation. Modulates various viral and cellular promoters in a promoter context-dependent manner. Does not bind DNA directly. The polypeptide is Transcription elongation factor A protein-like 1 (Gorilla gorilla gorilla (Western lowland gorilla)).